Consider the following 481-residue polypeptide: Tripartite motif-containing protein 10 (481 aa).

The RING-type zinc finger occupies 16–61 (CPICQGTLREPVTIDCGHNFCRACLTRYCEIPGPDLEESPTCPLCK). The B box-type zinc-finger motif lies at 94–135 (GEEDVCQEHGEKIYFFCEDDEMQLCVVCREAGEHATHTMRFL). Zn(2+) is bound by residues cysteine 99, histidine 102, cysteine 121, and histidine 127. Positions 150–177 (LKCLRKEREEIQEIQSRENKRMQVLLTQ) form a coiled coil. Residues 292-481 (REMKMFLEKL…GRGSSFSLSS (190 aa)) form the B30.2/SPRY domain.

This sequence belongs to the TRIM/RBCC family. In terms of assembly, interacts with IFNAR1; this interaction prevents association of IFNAR1 with TYK2.

The protein resides in the cytoplasm. Functionally, E3 ligase that plays an essential role in the differentiation and survival of terminal erythroid cells. May directly bind to PTEN and promote its ubiquitination, resulting in its proteasomal degradation and activation of hypertrophic signaling. In addition, plays a role in immune response regulation by repressing the phosphorylation of STAT1 and STAT2 in the interferon/JAK/STAT signaling pathway independent of its E3 ligase activity. Mechanistically, interacts with the intracellular domain of IFNAR1 and thereby inhibits the association between TYK2 and IFNAR1. This Homo sapiens (Human) protein is Tripartite motif-containing protein 10 (TRIM10).